The primary structure comprises 338 residues: S-adenosylmethionine:tRNA ribosyltransferase-isomerase (338 aa).

Belongs to the QueA family. In terms of assembly, monomer.

The protein localises to the cytoplasm. The enzyme catalyses 7-aminomethyl-7-carbaguanosine(34) in tRNA + S-adenosyl-L-methionine = epoxyqueuosine(34) in tRNA + adenine + L-methionine + 2 H(+). Its pathway is tRNA modification; tRNA-queuosine biosynthesis. Functionally, transfers and isomerizes the ribose moiety from AdoMet to the 7-aminomethyl group of 7-deazaguanine (preQ1-tRNA) to give epoxyqueuosine (oQ-tRNA). The sequence is that of S-adenosylmethionine:tRNA ribosyltransferase-isomerase from Francisella tularensis subsp. novicida (strain U112).